The following is a 141-amino-acid chain: Large ribosomal subunit protein uL11 (141 aa).

The protein belongs to the universal ribosomal protein uL11 family. Part of the ribosomal stalk of the 50S ribosomal subunit. Interacts with L10 and the large rRNA to form the base of the stalk. L10 forms an elongated spine to which L12 dimers bind in a sequential fashion forming a multimeric L10(L12)X complex. In terms of processing, one or more lysine residues are methylated.

Its function is as follows. Forms part of the ribosomal stalk which helps the ribosome interact with GTP-bound translation factors. This Campylobacter concisus (strain 13826) protein is Large ribosomal subunit protein uL11.